A 280-amino-acid chain; its full sequence is Proteasome subunit beta 2 (280 aa).

The propeptide at 1 to 52 is removed in mature form; by autocatalysis; the sequence is MTERERGQGLPAEFFAVGTASFVELLSRTAPQLLPVNRVRDGSHPMPDIPHG. Thr-53 acts as the Nucleophile in catalysis.

It belongs to the peptidase T1B family. In terms of assembly, the 20S proteasome core is composed of 14 alpha and 14 beta subunits that assemble into four stacked heptameric rings, resulting in a barrel-shaped structure. The two inner rings, each composed of seven catalytic beta subunits, are sandwiched by two outer rings, each composed of seven alpha subunits. The catalytic chamber with the active sites is on the inside of the barrel. Has a gated structure, the ends of the cylinder being occluded by the N-termini of the alpha-subunits. Is capped by the proteasome-associated ATPase, ARC.

Its subcellular location is the cytoplasm. It catalyses the reaction Cleavage of peptide bonds with very broad specificity.. It participates in protein degradation; proteasomal Pup-dependent pathway. Its activity is regulated as follows. The formation of the proteasomal ATPase ARC-20S proteasome complex, likely via the docking of the C-termini of ARC into the intersubunit pockets in the alpha-rings, may trigger opening of the gate for substrate entry. Interconversion between the open-gate and close-gate conformations leads to a dynamic regulation of the 20S proteasome proteolysis activity. Functionally, component of the proteasome core, a large protease complex with broad specificity involved in protein degradation. This Thermomonospora curvata (strain ATCC 19995 / DSM 43183 / JCM 3096 / KCTC 9072 / NBRC 15933 / NCIMB 10081 / Henssen B9) protein is Proteasome subunit beta 2.